Reading from the N-terminus, the 88-residue chain is ATP synthase subunit 9, mitochondrial (88 aa).

Transmembrane regions (helical) follow at residues 8 to 28 (IGAG…GNVF) and 45 to 72 (LFGY…LILF).

Belongs to the ATPase C chain family. In terms of assembly, F-type ATPases have 2 components, CF(1) - the catalytic core - and CF(0) - the membrane proton channel. CF(1) has five subunits: alpha(3), beta(3), gamma(1), delta(1), epsilon(1). CF(0) has three main subunits: a, b and c.

The protein localises to the mitochondrion membrane. It carries out the reaction ATP + H2O + 4 H(+)(in) = ADP + phosphate + 5 H(+)(out). Its function is as follows. This protein is one of the chains of the nonenzymatic membrane component (F0) of mitochondrial ATPase. The sequence is that of ATP synthase subunit 9, mitochondrial (ATP9) from Beta vulgaris (Sugar beet).